A 500-amino-acid polypeptide reads, in one-letter code: Cytochrome P450 6B4 (500 aa).

Heme is bound at residue Cys-443.

It belongs to the cytochrome P450 family. Requires heme as cofactor.

It localises to the endoplasmic reticulum membrane. The protein resides in the microsome membrane. It catalyses the reaction an organic molecule + reduced [NADPH--hemoprotein reductase] + O2 = an alcohol + oxidized [NADPH--hemoprotein reductase] + H2O + H(+). In terms of biological role, enables the insect to feed on furanocoumarin-producing plants and evolved as an adaptation for detoxification of xanthotoxin and other furanocoumarins. This isozyme metabolizes isopimpinellin, imperatorin, and bergapten at high rates, xanthotoxin and psoralen at intermediate rates and angelicin, sphondin, and trioxsalen only at very low rates. The chain is Cytochrome P450 6B4 (CYP6B4) from Papilio glaucus (Eastern tiger swallowtail butterfly).